The primary structure comprises 344 residues: Phosphoribosylformylglycinamidine cyclo-ligase (344 aa).

The protein belongs to the AIR synthase family.

Its subcellular location is the cytoplasm. The catalysed reaction is 2-formamido-N(1)-(5-O-phospho-beta-D-ribosyl)acetamidine + ATP = 5-amino-1-(5-phospho-beta-D-ribosyl)imidazole + ADP + phosphate + H(+). Its pathway is purine metabolism; IMP biosynthesis via de novo pathway; 5-amino-1-(5-phospho-D-ribosyl)imidazole from N(2)-formyl-N(1)-(5-phospho-D-ribosyl)glycinamide: step 2/2. The chain is Phosphoribosylformylglycinamidine cyclo-ligase from Haemophilus influenzae (strain PittEE).